Here is a 126-residue protein sequence, read N- to C-terminus: Large ribosomal subunit protein bL20 (126 aa).

This sequence belongs to the bacterial ribosomal protein bL20 family.

Its function is as follows. Binds directly to 23S ribosomal RNA and is necessary for the in vitro assembly process of the 50S ribosomal subunit. It is not involved in the protein synthesizing functions of that subunit. The polypeptide is Large ribosomal subunit protein bL20 (Acholeplasma laidlawii (strain PG-8A)).